Consider the following 490-residue polypeptide: Aspartyl/glutamyl-tRNA(Asn/Gln) amidotransferase subunit B (490 aa).

The protein belongs to the GatB/GatE family. GatB subfamily. Heterotrimer of A, B and C subunits.

The catalysed reaction is L-glutamyl-tRNA(Gln) + L-glutamine + ATP + H2O = L-glutaminyl-tRNA(Gln) + L-glutamate + ADP + phosphate + H(+). It catalyses the reaction L-aspartyl-tRNA(Asn) + L-glutamine + ATP + H2O = L-asparaginyl-tRNA(Asn) + L-glutamate + ADP + phosphate + 2 H(+). Allows the formation of correctly charged Asn-tRNA(Asn) or Gln-tRNA(Gln) through the transamidation of misacylated Asp-tRNA(Asn) or Glu-tRNA(Gln) in organisms which lack either or both of asparaginyl-tRNA or glutaminyl-tRNA synthetases. The reaction takes place in the presence of glutamine and ATP through an activated phospho-Asp-tRNA(Asn) or phospho-Glu-tRNA(Gln). The protein is Aspartyl/glutamyl-tRNA(Asn/Gln) amidotransferase subunit B of Prochlorococcus marinus (strain MIT 9515).